A 121-amino-acid polypeptide reads, in one-letter code: Large ribosomal subunit protein bL20 (121 aa).

This sequence belongs to the bacterial ribosomal protein bL20 family.

Functionally, binds directly to 23S ribosomal RNA and is necessary for the in vitro assembly process of the 50S ribosomal subunit. It is not involved in the protein synthesizing functions of that subunit. The sequence is that of Large ribosomal subunit protein bL20 from Ruegeria sp. (strain TM1040) (Silicibacter sp.).